A 32-amino-acid chain; its full sequence is Cytochrome b6-f complex subunit 7 (32 aa).

The chain crosses the membrane as a helical span at residues 9 to 27 (AALFWVLIPLGLAGGALLL).

This sequence belongs to the PetM family. In terms of assembly, the 4 large subunits of the cytochrome b6-f complex are cytochrome b6, subunit IV (17 kDa polypeptide, PetD), cytochrome f and the Rieske protein, while the 4 small subunits are PetG, PetL, PetM and PetN. The complex functions as a dimer.

The protein resides in the cellular thylakoid membrane. Its function is as follows. Component of the cytochrome b6-f complex, which mediates electron transfer between photosystem II (PSII) and photosystem I (PSI), cyclic electron flow around PSI, and state transitions. The protein is Cytochrome b6-f complex subunit 7 of Synechococcus sp. (strain RCC307).